The following is a 410-amino-acid chain: Translation initiation factor 2 subunit gamma (410 aa).

The 194-residue stretch at 9–202 (QAEVNIGMVG…AIEEFIPTPK (194 aa)) folds into the tr-type G domain. Residues 18-25 (GHVDHGKT) form a G1 region. 4 residues coordinate Mg(2+): Asp-21, Thr-25, Gly-46, and Thr-48. A GTP-binding site is contributed by 21-26 (DHGKTT). The segment at 46-50 (GITIK) is G2. Zn(2+) contacts are provided by Cys-61, Cys-64, Cys-73, and Cys-76. Residues 90–93 (DAPG) form a G3 region. GTP contacts are provided by residues 145–148 (NKIE) and 180–182 (SAL). The interval 145-148 (NKIE) is G4. Residues 180–182 (SAL) are G5.

The protein belongs to the TRAFAC class translation factor GTPase superfamily. Classic translation factor GTPase family. EIF2G subfamily. Heterotrimer composed of an alpha, a beta and a gamma chain. The cofactor is Mg(2+).

The catalysed reaction is GTP + H2O = GDP + phosphate + H(+). Functionally, eIF-2 functions in the early steps of protein synthesis by forming a ternary complex with GTP and initiator tRNA. The protein is Translation initiation factor 2 subunit gamma of Thermococcus kodakarensis (strain ATCC BAA-918 / JCM 12380 / KOD1) (Pyrococcus kodakaraensis (strain KOD1)).